A 585-amino-acid chain; its full sequence is Phosphomethylpyrimidine synthase (585 aa).

Over residues 89-107 (RGDTESYEGRHVKPEDNGY) the composition is skewed to basic and acidic residues. The segment at 89 to 116 (RGDTESYEGRHVKPEDNGYRSRNGSHQH) is disordered. Residues asparagine 199, methionine 228, tyrosine 257, histidine 293, 313 to 315 (SRG), 354 to 357 (DGLR), and glutamate 393 each bind substrate. Residue histidine 397 coordinates Zn(2+). Tyrosine 420 lines the substrate pocket. Histidine 461 provides a ligand contact to Zn(2+). Cysteine 541, cysteine 544, and cysteine 549 together coordinate [4Fe-4S] cluster.

It belongs to the ThiC family. [4Fe-4S] cluster serves as cofactor.

The enzyme catalyses 5-amino-1-(5-phospho-beta-D-ribosyl)imidazole + S-adenosyl-L-methionine = 4-amino-2-methyl-5-(phosphooxymethyl)pyrimidine + CO + 5'-deoxyadenosine + formate + L-methionine + 3 H(+). It participates in cofactor biosynthesis; thiamine diphosphate biosynthesis. Catalyzes the synthesis of the hydroxymethylpyrimidine phosphate (HMP-P) moiety of thiamine from aminoimidazole ribotide (AIR) in a radical S-adenosyl-L-methionine (SAM)-dependent reaction. The protein is Phosphomethylpyrimidine synthase of Bacillus pumilus (strain SAFR-032).